The chain runs to 149 residues: Transcriptional regulator MraZ (149 aa).

SpoVT-AbrB domains are found at residues Lys7–His54 and Ala83–Asn126.

The protein belongs to the MraZ family. In terms of assembly, forms oligomers.

It localises to the cytoplasm. The protein resides in the nucleoid. The protein is Transcriptional regulator MraZ of Rickettsia canadensis (strain McKiel).